The following is a 183-amino-acid chain: Large ribosomal subunit protein uL22 (183 aa).

This sequence belongs to the universal ribosomal protein uL22 family.

The sequence is that of Large ribosomal subunit protein uL22 (RPL17) from Podocoryna carnea (Hydrozoan).